The primary structure comprises 198 residues: Transcription factor BHLH133 (198 aa).

Residues 114–127 (SAESSQSYYAKNRR) form a basic motif; degenerate region. The bHLH domain maps to 114-163 (SAESSQSYYAKNRRQRINERLRILQELIPNGTKVDISTMLEEAIQYVKFL). The tract at residues 128 to 163 (QRINERLRILQELIPNGTKVDISTMLEEAIQYVKFL) is helix-loop-helix motif.

Belongs to the bHLH protein family.

It localises to the nucleus. In terms of biological role, transcription factor that acts as a regulator of iron homeostasis. May act as negative regulator of iron transportation from root to shoot. Does not seem to be involved in the suppression of the induction of iron deficiency responsive genes. This chain is Transcription factor BHLH133, found in Oryza sativa subsp. japonica (Rice).